The sequence spans 92 residues: Small ribosomal subunit protein uS19 (92 aa).

Belongs to the universal ribosomal protein uS19 family.

Its function is as follows. Protein S19 forms a complex with S13 that binds strongly to the 16S ribosomal RNA. This Rickettsia felis (strain ATCC VR-1525 / URRWXCal2) (Rickettsia azadi) protein is Small ribosomal subunit protein uS19.